The primary structure comprises 481 residues: Subtilisin-like protease 1 (481 aa).

An N-terminal signal peptide occupies residues 1 to 19 (MGVFRFISISLAAVSAANA). Residues 20-116 (AQILSMPHAQ…VEPDTIISVH (97 aa)) constitute a propeptide that is removed on maturation. The 82-residue stretch at 34–115 (SYIVMMKDDT…FVEPDTIISV (82 aa)) folds into the Inhibitor I9 domain. Residues 126–400 (SWGLARISSS…NVLINNGGAK (275 aa)) form the Peptidase S8 domain. Residues D158 and H190 each act as charge relay system in the active site. The interval 175–198 (GSNQVNDGDDNDRSGHGTHTSGTM) is disordered. N251 carries N-linked (GlcNAc...) asparagine glycosylation. Residues 281-312 (GNDNTDARSSSPASEPSVCTVGASAEDDSRSS) are disordered. The span at 282–294 (NDNTDARSSSPAS) shows a compositional bias: polar residues. Catalysis depends on S345, which acts as the Charge relay system. The segment at 379-455 (ASISDVGPGT…HPHTPFPGGD (77 aa)) is disordered. A compositionally biased stretch (pro residues) spans 424 to 450 (PQQPAPGEPSTPAPAPMPPTPQHPHTP).

It belongs to the peptidase S8 family.

It localises to the secreted. Functionally, secreted subtilisin-like serine protease with keratinolytic activity that contributes to pathogenicity. The polypeptide is Subtilisin-like protease 1 (SUB1) (Arthroderma gypseum (strain ATCC MYA-4604 / CBS 118893) (Microsporum gypseum)).